Reading from the N-terminus, the 117-residue chain is Protein OPG035 (117 aa).

This sequence belongs to the poxviridae OPG035 family.

Its function is as follows. Bcl-2-like protein which contributes to virulence by preventing host NF-kappa-B activation in response to pro-inflammatory stimuli such as TNF-alpha or IL1B. This is Protein OPG035 (OPG035) from Homo sapiens (Human).